The chain runs to 213 residues: MSRQLSRTDNLIHQFDTILRTLVPHAATASRANPAAGTQDKAMSDAERRHAAGLMRINHTGEVCAQALYQGQGLTAKLHETRDQMEQAAAEEIDHLAWCDERLRELDSRTSYLNPAFYAASFGMGALAGKLGDNISLGFVAATEEQVGRHLDDHMHKLPMGDRRSRAVLEQMRTDEAHHERWALEAGGARFPAPLKLGMRLMSKVMTKSVYTL.

Residues glutamate 62, glutamate 92, histidine 95, glutamate 144, glutamate 176, and histidine 179 each contribute to the Fe cation site.

The protein belongs to the COQ7 family. Fe cation serves as cofactor.

Its subcellular location is the cell membrane. The catalysed reaction is a 5-methoxy-2-methyl-3-(all-trans-polyprenyl)benzene-1,4-diol + AH2 + O2 = a 3-demethylubiquinol + A + H2O. The protein operates within cofactor biosynthesis; ubiquinone biosynthesis. Functionally, catalyzes the hydroxylation of 2-nonaprenyl-3-methyl-6-methoxy-1,4-benzoquinol during ubiquinone biosynthesis. This Chromohalobacter salexigens (strain ATCC BAA-138 / DSM 3043 / CIP 106854 / NCIMB 13768 / 1H11) protein is 3-demethoxyubiquinol 3-hydroxylase.